A 475-amino-acid chain; its full sequence is MTGPHSNIVHVIGAGLAGSEAAWQVAKAGVPVMLHEMRPDRMTEAHRTDGLAELVCSNSFRSDDAANNAVGLLHAEMRRLGSLIMRAADANQVPAGGALAVDRDGFSAAVTKALNDHPLIEIARGEIAGLPPADWGNVIVATGPLTSAPLADAIRELTDENALAFFDAIAPIVHRESIDMSVAWFQSRYDKVGPGGNGADYINCPMTKEQYEGFVAALIAGEKTEFKEWETNTPYFDGCLPIEVMAERGPETLRHGPMKPVGLTNPHDPTTKAYAIVQLRQDNKLGTLYNIVGFQTKLKYGEQQRIFRTIPGLEKAEFARLGGLHRNTFLNSPKLLDGQLRLRAQPRLRFAGQMTGCEGYVESASVGLIAGLYAAADARGETLASPPATTALGSLLGHITGGHIETIEPGTRSFQPMNINFGLFPPLASAPTKKPDGTRLRGNEKTVAKKQAMSALALADLDRWIADHLRIAAAA.

An FAD-binding site is contributed by 13-18 (GAGLAG).

The protein belongs to the MnmG family. TrmFO subfamily. The cofactor is FAD.

The protein resides in the cytoplasm. The enzyme catalyses uridine(54) in tRNA + (6R)-5,10-methylene-5,6,7,8-tetrahydrofolate + NADH + H(+) = 5-methyluridine(54) in tRNA + (6S)-5,6,7,8-tetrahydrofolate + NAD(+). It catalyses the reaction uridine(54) in tRNA + (6R)-5,10-methylene-5,6,7,8-tetrahydrofolate + NADPH + H(+) = 5-methyluridine(54) in tRNA + (6S)-5,6,7,8-tetrahydrofolate + NADP(+). Catalyzes the folate-dependent formation of 5-methyl-uridine at position 54 (M-5-U54) in all tRNAs. This chain is Methylenetetrahydrofolate--tRNA-(uracil-5-)-methyltransferase TrmFO, found in Bradyrhizobium diazoefficiens (strain JCM 10833 / BCRC 13528 / IAM 13628 / NBRC 14792 / USDA 110).